The primary structure comprises 259 residues: 3-deoxy-manno-octulosonate cytidylyltransferase (259 aa).

The protein belongs to the KdsB family.

It is found in the cytoplasm. The enzyme catalyses 3-deoxy-alpha-D-manno-oct-2-ulosonate + CTP = CMP-3-deoxy-beta-D-manno-octulosonate + diphosphate. The protein operates within nucleotide-sugar biosynthesis; CMP-3-deoxy-D-manno-octulosonate biosynthesis; CMP-3-deoxy-D-manno-octulosonate from 3-deoxy-D-manno-octulosonate and CTP: step 1/1. It functions in the pathway bacterial outer membrane biogenesis; lipopolysaccharide biosynthesis. Functionally, activates KDO (a required 8-carbon sugar) for incorporation into bacterial lipopolysaccharide in Gram-negative bacteria. The protein is 3-deoxy-manno-octulosonate cytidylyltransferase of Protochlamydia amoebophila (strain UWE25).